The sequence spans 142 residues: NTF2-related export protein 2 (142 aa).

The 120-residue stretch at 17–136 (AAEEFVNIYY…WKIASDCFRF (120 aa)) folds into the NTF2 domain.

As to quaternary structure, associates with NXF1, NXF2, NXF3 and NXF5.

It localises to the nucleus. It is found in the cytoplasm. In terms of biological role, regulator of protein export for NES-containing proteins. Also plays a role in mRNA nuclear export. This is NTF2-related export protein 2 (Nxt2) from Mus musculus (Mouse).